The chain runs to 273 residues: Large ribosomal subunit protein uL2 (273 aa).

Disordered regions lie at residues 31–50 (APLL…GRIT) and 221–273 (RGTA…RRGK). The span at 253 to 273 (KGKKTRHNKRTDKYIVRRRGK) shows a compositional bias: basic residues.

The protein belongs to the universal ribosomal protein uL2 family. Part of the 50S ribosomal subunit. Forms a bridge to the 30S subunit in the 70S ribosome.

In terms of biological role, one of the primary rRNA binding proteins. Required for association of the 30S and 50S subunits to form the 70S ribosome, for tRNA binding and peptide bond formation. It has been suggested to have peptidyltransferase activity; this is somewhat controversial. Makes several contacts with the 16S rRNA in the 70S ribosome. This is Large ribosomal subunit protein uL2 from Actinobacillus pleuropneumoniae serotype 7 (strain AP76).